A 517-amino-acid chain; its full sequence is 2,3-bisphosphoglycerate-independent phosphoglycerate mutase (517 aa).

Mn(2+) is bound by residues Asp14 and Ser64. Ser64 functions as the Phosphoserine intermediate in the catalytic mechanism. Substrate is bound by residues His125, 155-156 (RD), Arg187, Arg193, 263-266 (RSDR), and Lys337. Asp404, His408, Asp445, His446, and His464 together coordinate Mn(2+).

Belongs to the BPG-independent phosphoglycerate mutase family. In terms of assembly, monomer. Mn(2+) is required as a cofactor.

It carries out the reaction (2R)-2-phosphoglycerate = (2R)-3-phosphoglycerate. Its pathway is carbohydrate degradation; glycolysis; pyruvate from D-glyceraldehyde 3-phosphate: step 3/5. In terms of biological role, catalyzes the interconversion of 2-phosphoglycerate and 3-phosphoglycerate. This chain is 2,3-bisphosphoglycerate-independent phosphoglycerate mutase, found in Nitrosococcus oceani (strain ATCC 19707 / BCRC 17464 / JCM 30415 / NCIMB 11848 / C-107).